The primary structure comprises 130 residues: Small ribosomal subunit protein uS9 (130 aa).

A disordered region spans residues 111–130 (VERKKVGLRKARRRPQFSKR). Residues 116–130 (VGLRKARRRPQFSKR) are compositionally biased toward basic residues.

This sequence belongs to the universal ribosomal protein uS9 family.

The polypeptide is Small ribosomal subunit protein uS9 (Enterobacter sp. (strain 638)).